Reading from the N-terminus, the 151-residue chain is Large ribosomal subunit protein uL13 (151 aa).

The protein belongs to the universal ribosomal protein uL13 family. In terms of assembly, part of the 50S ribosomal subunit.

Its function is as follows. This protein is one of the early assembly proteins of the 50S ribosomal subunit, although it is not seen to bind rRNA by itself. It is important during the early stages of 50S assembly. This chain is Large ribosomal subunit protein uL13, found in Microchaete diplosiphon (Fremyella diplosiphon).